Here is an 84-residue protein sequence, read N- to C-terminus: NAD(P)H-quinone oxidoreductase subunit O (84 aa).

This sequence belongs to the complex I NdhO subunit family. In terms of assembly, NDH-1 can be composed of about 15 different subunits; different subcomplexes with different compositions have been identified which probably have different functions.

Its subcellular location is the cellular thylakoid membrane. The catalysed reaction is a plastoquinone + NADH + (n+1) H(+)(in) = a plastoquinol + NAD(+) + n H(+)(out). The enzyme catalyses a plastoquinone + NADPH + (n+1) H(+)(in) = a plastoquinol + NADP(+) + n H(+)(out). NDH-1 shuttles electrons from an unknown electron donor, via FMN and iron-sulfur (Fe-S) centers, to quinones in the respiratory and/or the photosynthetic chain. The immediate electron acceptor for the enzyme in this species is believed to be plastoquinone. Couples the redox reaction to proton translocation, and thus conserves the redox energy in a proton gradient. Cyanobacterial NDH-1 also plays a role in inorganic carbon-concentration. The sequence is that of NAD(P)H-quinone oxidoreductase subunit O from Synechococcus sp. (strain CC9605).